Consider the following 355-residue polypeptide: MKFEHRPVLLEPTVDALLQADFGGRGASRARPRDEAAALTRQATGIFVDGTFGRGGHSRELLGRLGPQARLVVFDKDPEAIAVAQALAAEDARVTVVHGGFATMTEELAARGIERIDGVMLDLGVSSPQIDDADRGFSFMREGPLDMRMDTSRGPTVADWLAQASVEEMREVIADYGEERFAFQVAKAIAARRATRPLHTTLELAECVASAVRTREKGQHPATRTFQALRIYINRELEELARALASAIELLVPGGRLAVISFHSLEDRMVKQCIAAAARPAAAHPRLPLRESELPQPILQTLGKVVADDAEVAGNARSRSAILRAAERTSQPLPATGAEDFVPAVPGAAEKGRRR.

S-adenosyl-L-methionine is bound by residues 55-57, Asp75, Asp122, and Gln129; that span reads GGH. The segment at 327 to 355 is disordered; the sequence is ERTSQPLPATGAEDFVPAVPGAAEKGRRR.

It belongs to the methyltransferase superfamily. RsmH family.

The protein resides in the cytoplasm. It carries out the reaction cytidine(1402) in 16S rRNA + S-adenosyl-L-methionine = N(4)-methylcytidine(1402) in 16S rRNA + S-adenosyl-L-homocysteine + H(+). Specifically methylates the N4 position of cytidine in position 1402 (C1402) of 16S rRNA. The chain is Ribosomal RNA small subunit methyltransferase H from Bordetella avium (strain 197N).